The sequence spans 808 residues: DNA ligase (808 aa).

Positions methionine 1 to proline 30 are disordered. The segment covering proline 18–proline 30 has biased composition (low complexity). NAD(+) contacts are provided by residues aspartate 61–aspartate 65, serine 110–leucine 111, and aspartate 141. Catalysis depends on lysine 143, which acts as the N6-AMP-lysine intermediate. NAD(+) contacts are provided by arginine 164, glutamate 202, lysine 334, and lysine 358. 4 residues coordinate Zn(2+): cysteine 453, cysteine 456, cysteine 471, and cysteine 476. The BRCT domain maps to glutamate 644–glycine 733. The tract at residues leucine 720–leucine 808 is disordered. Residues valine 727 to proline 742 show a composition bias toward acidic residues. The segment covering alanine 746 to glycine 773 has biased composition (low complexity). Basic and acidic residues predominate over residues aspartate 779–serine 792.

Belongs to the NAD-dependent DNA ligase family. LigA subfamily. It depends on Mg(2+) as a cofactor. The cofactor is Mn(2+).

It carries out the reaction NAD(+) + (deoxyribonucleotide)n-3'-hydroxyl + 5'-phospho-(deoxyribonucleotide)m = (deoxyribonucleotide)n+m + AMP + beta-nicotinamide D-nucleotide.. Functionally, DNA ligase that catalyzes the formation of phosphodiester linkages between 5'-phosphoryl and 3'-hydroxyl groups in double-stranded DNA using NAD as a coenzyme and as the energy source for the reaction. It is essential for DNA replication and repair of damaged DNA. The sequence is that of DNA ligase from Nitratidesulfovibrio vulgaris (strain DSM 19637 / Miyazaki F) (Desulfovibrio vulgaris).